A 134-amino-acid polypeptide reads, in one-letter code: uncharacterized protein (134 aa).

The helical transmembrane segment at 4–24 (NLLILLSLLLVVVAIMWWLYE) threads the bilayer.

The protein resides in the membrane. This is an uncharacterized protein from Invertebrate iridescent virus 6 (IIV-6).